A 270-amino-acid polypeptide reads, in one-letter code: MLMYPHIDPIALQIGPLAIHWYGLTYLAAFGLFMFLGTRRLRHEPYASLTGAQAWTRKDVEDILFLGVLGVVVGGRLGYCLFYKPGYYLSHPLEIFYIWQGGMSFHGGLLGVIASMVWFARSRHRPWLQVADFVAPCVPTGLAAGRVGNFINGELWGRFCDPSLPWGMVFPQSGSMLPRHPSQVYQFLMEGLLLFVLLWLYARRERRQGEVAAAFLVGYGCFRFIAEYFREPDAFLGILSLGMSMGQWLCVPMIVAGVLLWVWARRQPAR.

Transmembrane regions (helical) follow at residues 17-37, 63-83, and 95-115; these read LAIH…MFLG, ILFL…CLFY, and IFYI…VIAS. Arg146 lines the a 1,2-diacyl-sn-glycero-3-phospho-(1'-sn-glycerol) pocket. 3 consecutive transmembrane segments (helical) span residues 182–202, 209–229, and 243–263; these read SQVY…WLYA, GEVA…AEYF, and MSMG…LWVW.

The protein belongs to the Lgt family.

The protein localises to the cell inner membrane. It carries out the reaction L-cysteinyl-[prolipoprotein] + a 1,2-diacyl-sn-glycero-3-phospho-(1'-sn-glycerol) = an S-1,2-diacyl-sn-glyceryl-L-cysteinyl-[prolipoprotein] + sn-glycerol 1-phosphate + H(+). It participates in protein modification; lipoprotein biosynthesis (diacylglyceryl transfer). Its function is as follows. Catalyzes the transfer of the diacylglyceryl group from phosphatidylglycerol to the sulfhydryl group of the N-terminal cysteine of a prolipoprotein, the first step in the formation of mature lipoproteins. The chain is Phosphatidylglycerol--prolipoprotein diacylglyceryl transferase from Paracidovorax citrulli (strain AAC00-1) (Acidovorax citrulli).